A 315-amino-acid chain; its full sequence is Protein-methionine-sulfoxide reductase catalytic subunit MsrP (315 aa).

Positions 1–45 (MPSYRPPKIASSEITPRQVYLRRREFLGAATLGAMALYGAGKASA) form a signal peptide, tat-type signal. Mo-molybdopterin contacts are provided by residues Asn71, 74 to 75 (YE), Cys129, Thr164, Asn214, Arg219, and 230 to 232 (GIK).

The protein belongs to the MsrP family. As to quaternary structure, heterodimer of a catalytic subunit (MsrP) and a heme-binding subunit (MsrQ). Mo-molybdopterin serves as cofactor. Predicted to be exported by the Tat system. The position of the signal peptide cleavage has not been experimentally proven.

It is found in the periplasm. It carries out the reaction L-methionyl-[protein] + a quinone + H2O = L-methionyl-(S)-S-oxide-[protein] + a quinol. The catalysed reaction is L-methionyl-[protein] + a quinone + H2O = L-methionyl-(R)-S-oxide-[protein] + a quinol. Part of the MsrPQ system that repairs oxidized periplasmic proteins containing methionine sulfoxide residues (Met-O), using respiratory chain electrons. Thus protects these proteins from oxidative-stress damage caused by reactive species of oxygen and chlorine generated by the host defense mechanisms. MsrPQ is essential for the maintenance of envelope integrity under bleach stress, rescuing a wide series of structurally unrelated periplasmic proteins from methionine oxidation. The catalytic subunit MsrP is non-stereospecific, being able to reduce both (R-) and (S-) diastereoisomers of methionine sulfoxide. The protein is Protein-methionine-sulfoxide reductase catalytic subunit MsrP of Rhizobium etli (strain ATCC 51251 / DSM 11541 / JCM 21823 / NBRC 15573 / CFN 42).